Reading from the N-terminus, the 338-residue chain is GTPase Obg (338 aa).

The 159-residue stretch at 1–159 (MKFVDSASVF…FTLDLELKLM (159 aa)) folds into the Obg domain. The disordered stretch occupies residues 123-145 (GGRGNQHFATSTHQAPRHAEPGQ). Residues 160-323 (ADVGLVGFPN…LKDALWRIIV (164 aa)) form the OBG-type G domain. GTP contacts are provided by residues 166–173 (GFPNAGKS), 191–195 (FTTLV), 213–216 (DIPG), 280–283 (TKMD), and 304–306 (SAV). Residues serine 173 and threonine 193 each contribute to the Mg(2+) site.

It belongs to the TRAFAC class OBG-HflX-like GTPase superfamily. OBG GTPase family. As to quaternary structure, monomer. The cofactor is Mg(2+).

It localises to the cytoplasm. In terms of biological role, an essential GTPase which binds GTP, GDP and possibly (p)ppGpp with moderate affinity, with high nucleotide exchange rates and a fairly low GTP hydrolysis rate. Plays a role in control of the cell cycle, stress response, ribosome biogenesis and in those bacteria that undergo differentiation, in morphogenesis control. This is GTPase Obg from Chlorobium chlorochromatii (strain CaD3).